Reading from the N-terminus, the 173-residue chain is MYSFMGGGLFCAWVGTILLVVATATDHWMQYRLSGAFAHQGLWRYCLGTKCYLQTESIAYWNATRAFMILSSLCATSGIIMGIVAFAQQPTFTRLSRPFSAGIMFFASTFFVLLALAIYTGVTVSFLGRRFGDWRFSWSYILGWVALLMTFFAGIFYMCAYRMHECRRLSTPR.

Residues 1–3 (MYS) are Cytoplasmic-facing. The chain crosses the membrane as a helical span at residues 4–24 (FMGGGLFCAWVGTILLVVATA). Residues 25 to 66 (TDHWMQYRLSGAFAHQGLWRYCLGTKCYLQTESIAYWNATRA) lie on the Extracellular side of the membrane. C-linked (Man) tryptophan; partial glycans are attached at residues tryptophan 43 and tryptophan 61. Residues 67-87 (FMILSSLCATSGIIMGIVAFA) traverse the membrane as a helical segment. Residues 88 to 98 (QQPTFTRLSRP) are Cytoplasmic-facing. Residues 99-119 (FSAGIMFFASTFFVLLALAIY) traverse the membrane as a helical segment. The Extracellular segment spans residues 120 to 140 (TGVTVSFLGRRFGDWRFSWSY). A helical transmembrane segment spans residues 141-161 (ILGWVALLMTFFAGIFYMCAY). Topologically, residues 162–173 (RMHECRRLSTPR) are cytoplasmic. Serine 170 is subject to Phosphoserine. Phosphothreonine is present on threonine 171.

Belongs to the PMP-22/EMP/MP20 family. As to quaternary structure, seems to be associated with itself or another lens membrane component via disulfide bonds. Post-translationally, predominantly monophosphorylated on Ser-170. Only about 15% diphosphorylated on both Ser-170 and Thr-171. In terms of processing, C-glycosylated. Trp-43 is more extensively C-glycosylated than Trp-61. C-glycosylation may be involved in membrane trafficking. Eye lens specific.

It is found in the membrane. Present in the thicker 16-17 nm junctions of mammalian lens fiber cells, where it may contribute to cell junctional organization. Acts as a receptor for calmodulin. May play an important role in both lens development and cataractogenesis. In Bos taurus (Bovine), this protein is Lens fiber membrane intrinsic protein (LIM2).